The sequence spans 599 residues: Endoribonuclease ZC3H12A (599 aa).

The interval 1 to 40 is disordered; the sequence is MSGPCGEKPVLEASPTMSLWEFEDSHSRQGTPRPGQELAA. A ubiquitin association domain region spans residues 42–87; the sequence is EASALELQMKVDFFRKLGYSSTEIHSVLQKLGVQADTNTVLGELVK. Residues 81 to 150 form a necessary for interaction with TANK region; sequence VLGELVKHGT…DGSNVAMSHG (70 aa). Positions 90–133 are disordered; that stretch reads TATERERQTSPDPCPQLPLVPRGGGTPKAPNLEPPLPEEEKEGS. Ser-99 carries the phosphoserine modification. The RNase stretch occupies residues 112-297; sequence GGGTPKAPNL…LDNFLRKKPL (186 aa). In terms of domain architecture, RNase NYN spans 135–290; that stretch reads LRPVVIDGSN…LGRHGPSLDN (156 aa). The segment at 214-220 is RNA binding; it reads RRVGGKR. Mg(2+) is bound at residue Asp-226. The C3H1-type zinc finger occupies 301-324; the sequence is HRKQPCPYGRKCTYGIKCRFFHPE. The tract at residues 301 to 457 is necessary for interaction with ZC3H12D; the sequence is HRKQPCPYGR…SELWGVRGGG (157 aa). A disordered region spans residues 343-420; the sequence is LSPPRAPSKD…SGSSFGPTDW (78 aa). At Ser-344 the chain carries Phosphoserine. A compositionally biased stretch (low complexity) spans 358–375; the sequence is PSPSSQSSSLLTESEQCS. The span at 386–399 shows a compositional bias: polar residues; that stretch reads SPGSRQEGLTQTYA. Residues Ser-438 and Ser-442 each carry the phosphoserine modification. The tract at residues 522–546 is disordered; that stretch reads PPPTSVLQEPPVQSPGAGRSPWGRA.

Belongs to the ZC3H12 family. In terms of assembly, oligomer. Found in a deubiquitination complex with TANK, USP10 and ZC3H12A; this complex inhibits genotoxic stress- or interleukin-1-beta-mediated NF-kappaB activation by promoting IKBKG or TRAF6 deubiquitination. Interacts with IKBKG; this interaction increases in response to DNA damage. Interacts with TANK; this interaction increases in response to DNA damage and serves as a bridge to anchor both TANK and USP10 into a deubiquitinating complex. Interacts with TRAF6; this interaction increases in response to DNA damage and is stimulated by TANK. Interacts with USP10; this interaction increases in response to DNA damage and serves as a bridge to anchor both TANK and USP10 into a deubiquitinating complex. Interacts with ZC3H12D. Interacts with TNRC6A. Interacts with IKBKB/IKKB. Interacts with IKBKB/IKKB. Interacts with BTRC; the interaction occurs when ZC3H12A is phosphorylated in a IKBKB/IKKB-dependent manner. Interacts with IRAK1; this interaction increases the interaction between ZC3H12A and IKBKB/IKKB. Interacts with UPF1; this interaction occurs in a mRNA translationally active- and termination-dependent manner and is essential for ZC3H12A-mediated degradation of target mRNAs. Associates with ribosomes. Interacts with ubiquitin. (Microbial infection) Oligomerization is necessary for antiviral activity. Mg(2+) serves as cofactor. Post-translationally, phosphorylated by IRAK1; phosphorylation is necessary for subsequent phosphorylation by the I-kappa-B-kinase (IKK) complex. Phosphorylated by I-kappa-B-kinase (IKK) subunits IKBKB/IKKB and CHUK/IKKA at Ser-438 and Ser-442; these phosphorylations promote ubiquitin proteasome-mediated degradation of ZC3H12A and hence facilitates rapid and robust production of IL-6 mRNA in response to toll-like receptor (TLR) or IL-1 receptor stimuli. In terms of processing, (Microbial infection) Rapidly degraded in activated T-cells in response to phorbol 13-acetate 12-myristate (PMA) during HIV-1 viral infection. Ubiquitinated; ubiquitination is induced in response to interleukin IL1 receptor stimuli in a IKBKB/IKKB and IRAK1-dependent manner, leading to proteasome-mediated degradation. Post-translationally, proteolytically cleaved between Arg-111 and Arg-214 by MALT1 in activated T-cells; cleavage at Arg-111 is critical for promoting ZC3H12A degradation in response to T-cell receptor (TCR) stimulation, and hence is necessary for prolonging the stability of a set of mRNAs controlling T-cell activation and Th17 cell differentiation. Expressed in heart, placenta, spleen, kidney, liver and lung. Expressed in leukocytes. Expressed in monocyte.

Its subcellular location is the nucleus. It is found in the cytoplasm. The protein localises to the P-body. It localises to the rough endoplasmic reticulum membrane. The protein resides in the cytoplasmic granule. In terms of biological role, endoribonuclease involved in various biological functions such as cellular inflammatory response and immune homeostasis, glial differentiation of neuroprogenitor cells, cell death of cardiomyocytes, adipogenesis and angiogenesis. Functions as an endoribonuclease involved in mRNA decay. Modulates the inflammatory response by promoting the degradation of a set of translationally active cytokine-induced inflammation-related mRNAs, such as IL6 and IL12B, during the early phase of inflammation. Prevents aberrant T-cell-mediated immune reaction by degradation of multiple mRNAs controlling T-cell activation, such as those encoding cytokines (IL6 and IL2), cell surface receptors (ICOS, TNFRSF4 and TNFR2) and transcription factor (REL). Inhibits cooperatively with ZC3H12A the differentiation of helper T cells Th17 in lungs. They repress target mRNA encoding the Th17 cell-promoting factors IL6, ICOS, REL, IRF4, NFKBID and NFKBIZ. The cooperation requires RNA-binding by RC3H1 and the nuclease activity of ZC3H12A. Together with RC3H1, destabilizes TNFRSF4/OX40 mRNA by binding to the conserved stem loop structure in its 3'UTR. Self regulates by destabilizing its own mRNA. Cleaves mRNA harboring a stem-loop (SL), often located in their 3'-UTRs, during the early phase of inflammation in a helicase UPF1-dependent manner. Plays a role in the inhibition of microRNAs (miRNAs) biogenesis. Cleaves the terminal loop of a set of precursor miRNAs (pre-miRNAs) important for the regulation of the inflammatory response leading to their degradation, and thus preventing the biosynthesis of mature miRNAs. Also plays a role in promoting angiogenesis in response to inflammatory cytokines by inhibiting the production of antiangiogenic microRNAs via its anti-dicer RNase activity. Affects the overall ubiquitination of cellular proteins. Positively regulates deubiquitinase activity promoting the cleavage at 'Lys-48'- and 'Lys-63'-linked polyubiquitin chains on TNF receptor-associated factors (TRAFs), preventing JNK and NF-kappa-B signaling pathway activation, and hence negatively regulating macrophage-mediated inflammatory response and immune homeostasis. Also induces deubiquitination of the transcription factor HIF1A, probably leading to its stabilization and nuclear import, thereby positively regulating the expression of proangiogenic HIF1A-targeted genes. Involved in a TANK-dependent negative feedback response to attenuate NF-kappaB activation through the deubiquitination of IKBKG or TRAF6 in response to interleukin-1-beta (IL1B) stimulation or upon DNA damage. Prevents stress granule (SGs) formation and promotes macrophage apoptosis under stress conditions, including arsenite-induced oxidative stress, heat shock and energy deprivation. Plays a role in the regulation of macrophage polarization; promotes IL4-induced polarization of macrophages M1 into anti-inflammatory M2 state. May also act as a transcription factor that regulates the expression of multiple genes involved in inflammatory response, angiogenesis, adipogenesis and apoptosis. Functions as a positive regulator of glial differentiation of neuroprogenitor cells through an amyloid precursor protein (APP)-dependent signaling pathway. Attenuates septic myocardial contractile dysfunction in response to lipopolysaccharide (LPS) by reducing I-kappa-B-kinase (IKK)-mediated NF-kappa-B activation, and hence myocardial pro-inflammatory cytokine production. (Microbial infection) Binds to Japanese encephalitis virus (JEV) and Dengue virus (DEN) RNAs. Its function is as follows. (Microbial infection) Exhibits antiviral activity against HIV-1 in lymphocytes by decreasing the abundance of HIV-1 viral RNA species. The protein is Endoribonuclease ZC3H12A of Homo sapiens (Human).